A 241-amino-acid chain; its full sequence is Dolichol-phosphate mannosyltransferase subunit 1 (241 aa).

Residues P13, Y15, E17, I44, D46, D99, A100, D101, R128, R215, and K221 each coordinate GDP-alpha-D-mannose. D101 is a Mg(2+) binding site. D101 is a binding site for Mn(2+).

The protein belongs to the glycosyltransferase 2 family. The cofactor is Mg(2+). Mn(2+) is required as a cofactor. Requires Ca(2+) as cofactor.

It is found in the endoplasmic reticulum. It carries out the reaction a di-trans,poly-cis-dolichyl phosphate + GDP-alpha-D-mannose = a di-trans,poly-cis-dolichyl beta-D-mannosyl phosphate + GDP. It functions in the pathway protein modification; protein glycosylation. Functionally, transfers mannose from GDP-mannose to dolichol monophosphate to form dolichol phosphate mannose (Dol-P-Man) which is the mannosyl donor in pathways leading to N-glycosylation, glycosyl phosphatidylinositol membrane anchoring, and O-mannosylation of proteins. The sequence is that of Dolichol-phosphate mannosyltransferase subunit 1 from Drosophila melanogaster (Fruit fly).